Reading from the N-terminus, the 237-residue chain is Purine nucleoside phosphorylase DeoD-type (237 aa).

Residue His5 participates in a purine D-ribonucleoside binding. Residues Gly21, Arg25, Arg44, and 88 to 91 (RVGS) each bind phosphate. A purine D-ribonucleoside contacts are provided by residues 180 to 182 (EME) and 204 to 205 (SD). The active-site Proton donor is the Asp205.

This sequence belongs to the PNP/UDP phosphorylase family. As to quaternary structure, homohexamer; trimer of homodimers.

It carries out the reaction a purine D-ribonucleoside + phosphate = a purine nucleobase + alpha-D-ribose 1-phosphate. The catalysed reaction is a purine 2'-deoxy-D-ribonucleoside + phosphate = a purine nucleobase + 2-deoxy-alpha-D-ribose 1-phosphate. Functionally, catalyzes the reversible phosphorolytic breakdown of the N-glycosidic bond in the beta-(deoxy)ribonucleoside molecules, with the formation of the corresponding free purine bases and pentose-1-phosphate. The polypeptide is Purine nucleoside phosphorylase DeoD-type (Edwardsiella ictaluri (strain 93-146)).